Reading from the N-terminus, the 150-residue chain is Histone H3-like centromeric protein A (150 aa).

Residues 1–55 (MRPGSTPPSRRKSRPPRRVSPPLPTTSRTSPRRPHAQQQRRASRASPKKRFRPGT) form a disordered region. Over residues 41–53 (RASRASPKKRFRP) the composition is skewed to basic residues. The H3-like stretch occupies residues 53–150 (PGTRALMEIR…RIRGVNEGLG (98 aa)).

Belongs to the histone H3 family. Component of centromeric nucleosomes, where DNA is wrapped around a histone octamer core. The octamer contains two molecules each of H2A, H2B, CENPA and H4 assembled in one CENPA-H4 heterotetramer and two H2A-H2B heterodimers. CENPA modulates the DNA-binding characteristics of nucleosomes so that protruding DNA ends have higher flexibility than in nucleosomes containing conventional histone H3.

The protein localises to the nucleus. It is found in the chromosome. Its subcellular location is the centromere. In terms of biological role, histone H3-like nucleosomal protein that is specifically found in centromeric nucleosomes. Replaces conventional H3 in the nucleosome core of centromeric chromatin that serves as an assembly site for the inner kinetochore. The presence of CENPA subtly modifies the nucleosome structure and the way DNA is wrapped around the nucleosome and gives rise to protruding DNA ends that are less well-ordered and rigid compared to nucleosomes containing histone H3. May serve as an epigenetic mark that propagates centromere identity through replication and cell division. Required for recruitment and assembly of kinetochore proteins, and as a consequence required for progress through mitosis, chromosome segregation and cytokinesis. This is Histone H3-like centromeric protein A (cenpa) from Xenopus laevis (African clawed frog).